The chain runs to 345 residues: Endochitinase 4 (345 aa).

An N-terminal signal peptide occupies residues 1–27 (MAPLLNTGLVILPLIVSTLLGPMPAFA). Residues Asn-29 and Asn-89 are each glycosylated (N-linked (GlcNAc...) asparagine). Residues 41–345 (KVLQGYWENW…TFGDNVKGRL (305 aa)) form the GH18 domain. The active-site Proton donor is the Glu-163. Asn-316 is a glycosylation site (N-linked (GlcNAc...) asparagine).

This sequence belongs to the glycosyl hydrolase 18 family. Chitinase class V subfamily.

Its subcellular location is the secreted. It catalyses the reaction Random endo-hydrolysis of N-acetyl-beta-D-glucosaminide (1-&gt;4)-beta-linkages in chitin and chitodextrins.. Functionally, secreted chitinase involved in the degradation of chitin, a component of the cell walls of fungi and exoskeletal elements of some animals (including worms and arthropods). Participates in the infection process and directly acts in the penetration process of the host cuticle. The protein is Endochitinase 4 (chi4) of Metarhizium robertsii (strain ARSEF 23 / ATCC MYA-3075) (Metarhizium anisopliae (strain ARSEF 23)).